The primary structure comprises 325 residues: Adenine deaminase (325 aa).

Zn(2+) contacts are provided by H11, H13, and H189. The active-site Proton donor is E192. D270 lines the Zn(2+) pocket. D271 contributes to the substrate binding site.

The protein belongs to the metallo-dependent hydrolases superfamily. Adenosine and AMP deaminases family. Adenine deaminase type 2 subfamily. Requires Zn(2+) as cofactor.

The catalysed reaction is adenine + H2O + H(+) = hypoxanthine + NH4(+). In terms of biological role, catalyzes the hydrolytic deamination of adenine to hypoxanthine. Plays an important role in the purine salvage pathway and in nitrogen catabolism. The polypeptide is Adenine deaminase (Agrobacterium fabrum (strain C58 / ATCC 33970) (Agrobacterium tumefaciens (strain C58))).